The chain runs to 543 residues: Exodeoxyribonuclease 7 large subunit (543 aa).

The tract at residues 498–543 (VTGEGDKASPPPQAASATTTPAPGRPNPLPKSPKKSEPPAGQGSLF) is disordered.

This sequence belongs to the XseA family. In terms of assembly, heterooligomer composed of large and small subunits.

Its subcellular location is the cytoplasm. The enzyme catalyses Exonucleolytic cleavage in either 5'- to 3'- or 3'- to 5'-direction to yield nucleoside 5'-phosphates.. In terms of biological role, bidirectionally degrades single-stranded DNA into large acid-insoluble oligonucleotides, which are then degraded further into small acid-soluble oligonucleotides. This is Exodeoxyribonuclease 7 large subunit from Allorhizobium ampelinum (strain ATCC BAA-846 / DSM 112012 / S4) (Agrobacterium vitis (strain S4)).